A 287-amino-acid chain; its full sequence is Glutamate racemase (287 aa).

Residues 1–15 are compositionally biased toward polar residues; the sequence is MATKPQDANTTSREA. Residues 1 to 25 are disordered; sequence MATKPQDANTTSREAITSKADSPPR. Substrate-binding positions include 32–33 and 64–65; these read DS and YG. The Proton donor/acceptor role is filled by Cys96. 97-98 is a binding site for substrate; sequence NT. Catalysis depends on Cys208, which acts as the Proton donor/acceptor. 209–210 contacts substrate; it reads TH.

The protein belongs to the aspartate/glutamate racemases family.

The enzyme catalyses L-glutamate = D-glutamate. It functions in the pathway cell wall biogenesis; peptidoglycan biosynthesis. Its function is as follows. Provides the (R)-glutamate required for cell wall biosynthesis. The sequence is that of Glutamate racemase from Yersinia pseudotuberculosis serotype O:1b (strain IP 31758).